The primary structure comprises 428 residues: Serine--tRNA ligase (428 aa).

231 to 233 (TAE) serves as a coordination point for L-serine. 262 to 264 (RSE) provides a ligand contact to ATP. Glu-285 serves as a coordination point for L-serine. 349–352 (EISS) is an ATP binding site. Ser-385 is a binding site for L-serine.

This sequence belongs to the class-II aminoacyl-tRNA synthetase family. Type-1 seryl-tRNA synthetase subfamily. Homodimer. The tRNA molecule binds across the dimer.

It localises to the cytoplasm. It catalyses the reaction tRNA(Ser) + L-serine + ATP = L-seryl-tRNA(Ser) + AMP + diphosphate + H(+). It carries out the reaction tRNA(Sec) + L-serine + ATP = L-seryl-tRNA(Sec) + AMP + diphosphate + H(+). It functions in the pathway aminoacyl-tRNA biosynthesis; selenocysteinyl-tRNA(Sec) biosynthesis; L-seryl-tRNA(Sec) from L-serine and tRNA(Sec): step 1/1. Catalyzes the attachment of serine to tRNA(Ser). Is also able to aminoacylate tRNA(Sec) with serine, to form the misacylated tRNA L-seryl-tRNA(Sec), which will be further converted into selenocysteinyl-tRNA(Sec). The sequence is that of Serine--tRNA ligase from Staphylococcus haemolyticus (strain JCSC1435).